The primary structure comprises 254 residues: Receptor expression-enhancing protein 2 (254 aa).

2 helical membrane-spanning segments follow: residues 1–21 (MVSWIISRLVVLIFGTLYPAY) and 35–55 (YVKWMMYWIVFAFFTTAETLT). Phosphoserine is present on Ser152. The interval 164–254 (ALPLQGPDGR…KKTSAGGDSA (91 aa)) is disordered. Positions 195–204 (SVRSGTNQAD) are enriched in polar residues. The span at 205 to 219 (PRTEISEDDTGDKAP) shows a compositional bias: basic and acidic residues.

The protein belongs to the DP1 family. As to quaternary structure, interacts with odorant receptor proteins.

The protein resides in the membrane. Its function is as follows. Required for endoplasmic reticulum (ER) network formation, shaping and remodeling. May enhance the cell surface expression of odorant receptors. This is Receptor expression-enhancing protein 2 (REEP2) from Bos taurus (Bovine).